The sequence spans 118 residues: MNQKKINRIRRGKRTRLNIRESGKPSLIVNKTPRHIYAQIISGEGNKVLASISTLNKEVADAVHYTGNIESATKVGQMIAEKAKSLGIESLAFDRNGFRYHGRVKALADAARAAGLQF.

The protein belongs to the universal ribosomal protein uL18 family. As to quaternary structure, part of the 50S ribosomal subunit; part of the 5S rRNA/L5/L18/L25 subcomplex. Contacts the 5S and 23S rRNAs.

Functionally, this is one of the proteins that bind and probably mediate the attachment of the 5S RNA into the large ribosomal subunit, where it forms part of the central protuberance. This is Large ribosomal subunit protein uL18 from Dichelobacter nodosus (strain VCS1703A).